Consider the following 1755-residue polypeptide: Deleted in lung and esophageal cancer protein 1 (1755 aa).

A compositionally biased stretch (basic residues) spans 1–12 (METRSSKTRRSL). 3 disordered regions span residues 1–39 (METR…PSQP), 1339–1360 (PGPS…GSSS), and 1529–1553 (SQDG…EETA). Over residues 30-39 (PAGSSSPSQP) the composition is skewed to low complexity.

Interacts with alpha- and beta-tubulin. Interacts with BBS2, BBS4, BBS5, MKKS, TCP1, CCT2, CCT3, CCT4, CCT5 and CCT7. As to expression, expressed in all tissues examined. Expression is highest in prostate and testis.

The protein resides in the cytoplasm. Essential for spermatogenesis and male fertility. May play an important role in sperm head and tail formation. May act as a tumor suppressor by inhibiting cell proliferation. The polypeptide is Deleted in lung and esophageal cancer protein 1 (Homo sapiens (Human)).